Consider the following 326-residue polypeptide: Gamma-resorcylate decarboxylase (326 aa).

4 residues coordinate Mn(2+): glutamate 8, histidine 10, histidine 164, and aspartate 287. Aspartate 287 is a catalytic residue.

This sequence belongs to the metallo-dependent hydrolases superfamily. ACMSD family. In terms of assembly, homotetramer. Requires Mn(2+) as cofactor.

The catalysed reaction is 2,6-dihydroxybenzoate + H(+) = resorcinol + CO2. It catalyses the reaction 2,3-dihydroxybenzoate + H(+) = catechol + CO2. The protein operates within aromatic compound metabolism. Activity is inhibited by 2-nitroresorcinol (2-NR). Functionally, involved in the gamma-resorcylate (2,6-dihydroxybenzoate) catabolism. Catalyzes the reversible decarboxylation of gamma-resorcylate to resorcinol. Also catalyzes the decarboxylation of 2,3-dihydroxybenzoate to catechol, 2,4,6-trihydroxybenzoate to benzene-1,3,5-triol, and 2,6-dihydroxy-4-methylbenzoate to 5-methylbenzene-1,3-diol. This Polaromonas sp. (strain JS666 / ATCC BAA-500) protein is Gamma-resorcylate decarboxylase.